A 326-amino-acid chain; its full sequence is DNA repair protein XRCC4 (326 aa).

The segment at 1-212 is interaction with IFFO1; sequence MERKVSRIYL…QLEESTKPER (212 aa). Ser-53 bears the Phosphoserine; by PRKDC mark. Coiled coils occupy residues 131-165 and 185-209; these read LDTI…FEKC and NEKK…ESTK. An interaction with LIG4 region spans residues 180 to 211; sequence FILVLNEKKTKIRSLHKLLNEVQQLEESTKPE. Ser-193 bears the Phosphoserine; by PRKDC mark. Residues 203-326 form a disordered region; it reads QLEESTKPER…RNSSPEDLFD (124 aa). The span at 206–226 shows a compositional bias: basic and acidic residues; it reads ESTKPERENPCSDKTPEEHGL. Position 227 is a phosphotyrosine (Tyr-227). A Phosphoserine modification is found at Ser-230. Position 231 is a phosphothreonine (Thr-231). Ser-235 carries the phosphoserine modification. The residue at position 244 (Thr-244) is a Phosphothreonine. Residue Ser-250 is modified to Phosphoserine. Ser-254 is subject to Phosphoserine; by PRKDC. A Nuclear localization signal motif is present at residues 264 to 269; sequence RKRRHR. A Glycyl lysine isopeptide (Lys-Gly) (interchain with G-Cter in ubiquitin) cross-link involves residue Lys-290. At Ser-295 the chain carries Phosphoserine; by PRKDC. A Phosphoserine modification is found at Ser-296. Phosphoserine; by PRKDC is present on residues Ser-307 and Ser-312. Polar residues predominate over residues 307 to 326; sequence SAENMSLETLRNSSPEDLFD. Position 315 is a phosphothreonine; by PRKDC (Thr-315). Phosphoserine; by PRKDC is present on residues Ser-319 and Ser-320.

Belongs to the XRCC4-XLF family. XRCC4 subfamily. Homodimer and homotetramer in solution. Interacts with NHEJ1/XLF; the interaction is direct and is mediated via a head-to-head interaction between N-terminal head regions. Interacts with LIG4; the LIG4-XRCC4 subcomplex has a 1:2 stoichiometry and XRCC4 is required for LIG4 stability. Component of the core long-range non-homologous end joining (NHEJ) complex (also named DNA-PK complex) composed of PRKDC, LIG4, XRCC4, XRCC6/Ku70, XRCC5/Ku86 and NHEJ1/XLF. Additional component of the NHEJ complex includes PAXX. Following autophosphorylation, PRKDC dissociates from DNA, leading to formation of the short-range NHEJ complex, composed of LIG4, XRCC4, XRCC6/Ku70, XRCC5/Ku86 and NHEJ1/XLF. Interacts with PRKDC; the interaction is direct. Interacts with XRCC6/Ku70; the interaction is direct. Interacts with APTX and APLF. Forms a heterotetramer with IFFO1; the interaction involves LIG4-free XRCC4 and leads to the relocalization of IFFO1 to the sites of DNA damage. Interacts with PNKP; mainly interacts with PNKP when phosphorylated at Thr-231, but is also able to interact at much lower level with PNKP when not unphosphorylated. Interacts with POLL (DNA polymerase lambda). In terms of assembly, interacts with XKR4; interacts with the processed form of XKR4, which is cleaved by caspase. Phosphorylated by PRKDC at the C-terminus in response to DNA damage; Ser-254 and Ser-312 constitute the main phosphorylation sites. Phosphorylation by PRKDC at the C-terminus of XRCC4 and NHEJ1/XLF are highly redundant and regulate ability of the XRCC4-NHEJ1/XLF subcomplex to bridge DNA. Phosphorylation by PRKDC does not prevent interaction with NHEJ1/XLF but disrupts ability to bridge DNA and promotes detachment from DNA. Phosphorylation at Ser-319 and Ser-320 by PRKDC promotes recognition by the SCF(FBXW7) complex and subsequent ubiquitination via 'Lys-63'-linked ubiquitin. Phosphorylation at Thr-231 by CK2 promotes interaction with PNKP; regulating PNKP activity and localization to DNA damage sites. Phosphorylation by CK2 promotes interaction with APTX. Post-translationally, ubiquitinated at Lys-290 by the SCF(FBXW7) complex via 'Lys-63'-linked ubiquitination, thereby promoting double-strand break repair: the SCF(FBXW7) complex specifically recognizes XRCC4 when phosphorylated at Ser-319 and Ser-320 by PRKDC, and 'Lys-63'-linked ubiquitination facilitates DNA non-homologous end joining (NHEJ) by enhancing association with XRCC5/Ku80 and XRCC6/Ku70. Monoubiquitinated. In terms of processing, undergoes proteolytic processing by caspase-3 (CASP3). This generates the protein XRCC4, C-terminus (XRCC4/C), which translocates to the cytoplasm and activates phospholipid scramblase activity of XKR4, thereby promoting phosphatidylserine exposure on apoptotic cell surface.

It is found in the nucleus. The protein resides in the chromosome. It localises to the cytoplasm. Its function is as follows. DNA non-homologous end joining (NHEJ) core factor, required for double-strand break repair and V(D)J recombination. Acts as a scaffold protein that regulates recruitment of other proteins to DNA double-strand breaks (DSBs). Associates with NHEJ1/XLF to form alternating helical filaments that bridge DNA and act like a bandage, holding together the broken DNA until it is repaired. The XRCC4-NHEJ1/XLF subcomplex binds to the DNA fragments of a DSB in a highly diffusive manner and robustly bridges two independent DNA molecules, holding the broken DNA fragments in close proximity to one other. The mobility of the bridges ensures that the ends remain accessible for further processing by other repair factors. Plays a key role in the NHEJ ligation step of the broken DNA during DSB repair via direct interaction with DNA ligase IV (LIG4): the LIG4-XRCC4 subcomplex reseals the DNA breaks after the gap filling is completed. XRCC4 stabilizes LIG4, regulates its subcellular localization and enhances LIG4's joining activity. Binding of the LIG4-XRCC4 subcomplex to DNA ends is dependent on the assembly of the DNA-dependent protein kinase complex DNA-PK to these DNA ends. Promotes displacement of PNKP from processed strand break termini. Functionally, acts as an activator of the phospholipid scramblase activity of XKR4. This form, which is generated upon caspase-3 (CASP3) cleavage, translocates into the cytoplasm and interacts with XKR4, thereby promoting phosphatidylserine scramblase activity of XKR4 and leading to phosphatidylserine exposure on apoptotic cell surface. The sequence is that of DNA repair protein XRCC4 from Mus musculus (Mouse).